Consider the following 186-residue polypeptide: ATP-dependent protease subunit HslV (186 aa).

The active site involves threonine 14. Na(+) contacts are provided by alanine 168, cysteine 171, and threonine 174.

The protein belongs to the peptidase T1B family. HslV subfamily. As to quaternary structure, a double ring-shaped homohexamer of HslV is capped on each side by a ring-shaped HslU homohexamer. The assembly of the HslU/HslV complex is dependent on binding of ATP.

It is found in the cytoplasm. The catalysed reaction is ATP-dependent cleavage of peptide bonds with broad specificity.. Its activity is regulated as follows. Allosterically activated by HslU binding. Protease subunit of a proteasome-like degradation complex believed to be a general protein degrading machinery. This Bradyrhizobium sp. (strain ORS 278) protein is ATP-dependent protease subunit HslV.